Reading from the N-terminus, the 137-residue chain is Probable 4-amino-4-deoxy-L-arabinose-phosphoundecaprenol flippase subunit ArnF (137 aa).

Residues 1 to 3 (MNA) are Cytoplasmic-facing. Residues 4–24 (LRGWLAALGSMLLASAAQLGM) form a helical membrane-spanning segment. Over 25 to 44 (RWGMSRLPLPEAWAGQTPER) the chain is Periplasmic. Residues 45 to 65 (AALLAVALAVAAYAASLLCWL) traverse the membrane as a helical segment. At 66-76 (AALRHLPLGRA) the chain is on the cytoplasmic side. A helical membrane pass occupies residues 77-97 (YSLLSASYALVYLLAASLPAF). Topologically, residues 98-100 (DET) are periplasmic. Residues 101-121 (FSTSKILGVGLVVLGVLTVNA) form a helical membrane-spanning segment. Topologically, residues 122–137 (RRTAAAPAHHPSRKAP) are cytoplasmic.

It belongs to the ArnF family. As to quaternary structure, heterodimer of ArnE and ArnF.

It is found in the cell inner membrane. The protein operates within bacterial outer membrane biogenesis; lipopolysaccharide biosynthesis. Its function is as follows. Translocates 4-amino-4-deoxy-L-arabinose-phosphoundecaprenol (alpha-L-Ara4N-phosphoundecaprenol) from the cytoplasmic to the periplasmic side of the inner membrane. The protein is Probable 4-amino-4-deoxy-L-arabinose-phosphoundecaprenol flippase subunit ArnF of Pseudomonas aeruginosa (strain LESB58).